Reading from the N-terminus, the 665-residue chain is UvrABC system protein B (665 aa).

A Helicase ATP-binding domain is found at 25–178 (ASLQAEHRFQ…RQLLRDLTTI (154 aa)). 38 to 45 (GATGTGKT) contributes to the ATP binding site. The short motif at 91 to 114 (YYDYYQPEAYIPVTDTYIEKTAAI) is the Beta-hairpin element. Positions 429–595 (QVDDLLGEVR…PIVKKASNAI (167 aa)) constitute a Helicase C-terminal domain. Positions 626-661 (PELITQLEAQMKEAAKKLEFEEAAKYRDRIKQLRDK) constitute a UVR domain.

This sequence belongs to the UvrB family. As to quaternary structure, forms a heterotetramer with UvrA during the search for lesions. Interacts with UvrC in an incision complex.

The protein localises to the cytoplasm. Its function is as follows. The UvrABC repair system catalyzes the recognition and processing of DNA lesions. A damage recognition complex composed of 2 UvrA and 2 UvrB subunits scans DNA for abnormalities. Upon binding of the UvrA(2)B(2) complex to a putative damaged site, the DNA wraps around one UvrB monomer. DNA wrap is dependent on ATP binding by UvrB and probably causes local melting of the DNA helix, facilitating insertion of UvrB beta-hairpin between the DNA strands. Then UvrB probes one DNA strand for the presence of a lesion. If a lesion is found the UvrA subunits dissociate and the UvrB-DNA preincision complex is formed. This complex is subsequently bound by UvrC and the second UvrB is released. If no lesion is found, the DNA wraps around the other UvrB subunit that will check the other stand for damage. The polypeptide is UvrABC system protein B (Cyanothece sp. (strain PCC 7425 / ATCC 29141)).